Here is a 209-residue protein sequence, read N- to C-terminus: A-type ATP synthase subunit D (209 aa).

It belongs to the V-ATPase D subunit family. Has multiple subunits with at least A(3), B(3), C, D, E, F, H, I and proteolipid K(x).

It localises to the cell membrane. Its function is as follows. Component of the A-type ATP synthase that produces ATP from ADP in the presence of a proton gradient across the membrane. In Thermoplasma volcanium (strain ATCC 51530 / DSM 4299 / JCM 9571 / NBRC 15438 / GSS1), this protein is A-type ATP synthase subunit D.